The sequence spans 252 residues: Small ribosomal subunit protein uS2 (252 aa).

The protein belongs to the universal ribosomal protein uS2 family.

In Chlorobium phaeobacteroides (strain DSM 266 / SMG 266 / 2430), this protein is Small ribosomal subunit protein uS2.